Here is a 121-residue protein sequence, read N- to C-terminus: Large ribosomal subunit protein uL18 (121 aa).

The span at 1-22 (MIKKPDKKTLRQGKHKRVRRKV) shows a compositional bias: basic residues. Residues 1–23 (MIKKPDKKTLRQGKHKRVRRKVA) are disordered.

It belongs to the universal ribosomal protein uL18 family. As to quaternary structure, part of the 50S ribosomal subunit; part of the 5S rRNA/L5/L18/L25 subcomplex. Contacts the 5S and 23S rRNAs.

Functionally, this is one of the proteins that bind and probably mediate the attachment of the 5S RNA into the large ribosomal subunit, where it forms part of the central protuberance. This Syntrophomonas wolfei subsp. wolfei (strain DSM 2245B / Goettingen) protein is Large ribosomal subunit protein uL18.